Reading from the N-terminus, the 127-residue chain is Small ribosomal subunit protein uS12 (127 aa).

Positions 8–28 (IRTEREKARQKTKSPALKQCP) are disordered. Asp89 carries the 3-methylthioaspartic acid modification. Positions 102–127 (LDTAGVKDRKQGRSKYGTKRPKEAKK) are disordered. Residues 113–127 (GRSKYGTKRPKEAKK) are compositionally biased toward basic residues.

Belongs to the universal ribosomal protein uS12 family. As to quaternary structure, part of the 30S ribosomal subunit. Contacts proteins S8 and S17. May interact with IF1 in the 30S initiation complex.

Its function is as follows. With S4 and S5 plays an important role in translational accuracy. Functionally, interacts with and stabilizes bases of the 16S rRNA that are involved in tRNA selection in the A site and with the mRNA backbone. Located at the interface of the 30S and 50S subunits, it traverses the body of the 30S subunit contacting proteins on the other side and probably holding the rRNA structure together. The combined cluster of proteins S8, S12 and S17 appears to hold together the shoulder and platform of the 30S subunit. This is Small ribosomal subunit protein uS12 from Nostoc sp. (strain PCC 7120 / SAG 25.82 / UTEX 2576).